The sequence spans 352 residues: C-C chemokine receptor type 5 (352 aa).

The Extracellular segment spans residues 1–30 (MDYQVSSPTYDIDYYTSEPCQKINVKQIAA). Tyrosine 3 carries the post-translational modification Sulfotyrosine. 2 O-linked (GalNAc...) serine glycosylation sites follow: serine 6 and serine 7. Residues tyrosine 10, tyrosine 14, and tyrosine 15 each carry the sulfotyrosine modification. 2 cysteine pairs are disulfide-bonded: cysteine 20/cysteine 269 and cysteine 101/cysteine 178. The chain crosses the membrane as a helical span at residues 31-58 (RLLPPLYSLVFIFGFVGNILVVLILINC). At 59–68 (KRLKSMTDIY) the chain is on the cytoplasmic side. A helical membrane pass occupies residues 69 to 89 (LLNLAISDLLFLLTVPFWAHY). At 90 to 102 (AAAQWDFGNIMCQ) the chain is on the extracellular side. The chain crosses the membrane as a helical span at residues 103–124 (LLTGLYFIGFFSGIFFIILLTI). Residues 125–141 (DRYLAIVHAVFALKART) lie on the Cytoplasmic side of the membrane. A helical membrane pass occupies residues 142-166 (VTFGVVTSVITWVVAVFASLPGIIF). Residues 167–198 (TRSQREGLHYTCSSHFPYSQYQFWKNFRTLKI) are Extracellular-facing. A helical membrane pass occupies residues 199 to 218 (VILGLVLPLLVMVICYSGIL). At 219-235 (KTLLRCRNEKKRHRAVR) the chain is on the cytoplasmic side. Residues 236–260 (LIFTIMIVYFLFWAPYNIVLLLNTF) form a helical membrane-spanning segment. Over 261–277 (QEFFGLNNCSSSNRLDQ) the chain is Extracellular. A helical transmembrane segment spans residues 278–301 (AMQVTETLGMTHCCINPIIYAFVG). Topologically, residues 302 to 352 (EKFRNYLLVFFQKHIAKRFCKCCSIFQQEAPERASSVYTRTTGEQEISVGL) are cytoplasmic. 3 S-palmitoyl cysteine lipidation sites follow: cysteine 321, cysteine 323, and cysteine 324. Phosphoserine; by BARK1 occurs at positions 336, 337, and 349.

It belongs to the G-protein coupled receptor 1 family. In terms of assembly, interacts with PRAF2. Efficient ligand binding to CCL3/MIP-1alpha and CCL4/MIP-1beta requires sulfation, O-glycosylation and sialic acid modifications. Glycosylation on Ser-6 is required for efficient binding of CCL4. Interacts with GRK2. Interacts with ARRB1 and ARRB2. Interacts with CNIH4. Interacts with S100A4; this interaction stimulates T-lymphocyte chemotaxis. Post-translationally, sulfated on at least 2 of the N-terminal tyrosines. Sulfation is required for efficient binding of the chemokines, CCL3 and CCL4. In terms of processing, palmitoylation in the C-terminal is important for cell surface expression. Phosphorylation on serine residues in the C-terminal is stimulated by binding CC chemokines especially by APO-RANTES. Post-translationally, O-glycosylated, but not N-glycosylated. Ser-6 appears to be the major site even if Ser-7 may be also O-glycosylated. Also sialylated glycans present which contribute to chemokine binding. Thr-16 and Ser-17 may also be glycosylated and, if so, with small moieties such as a T-antigen.

Its subcellular location is the cell membrane. Receptor for a number of inflammatory CC-chemokines including CCL3/MIP-1-alpha, CCL4/MIP-1-beta and RANTES and subsequently transduces a signal by increasing the intracellular calcium ion level. May play a role in the control of granulocytic lineage proliferation or differentiation. Participates in T-lymphocyte migration to the infection site by acting as a chemotactic receptor. This chain is C-C chemokine receptor type 5 (CCR5), found in Mandrillus leucophaeus (Drill).